The sequence spans 25 residues: Hemocyanin subunit 3 (25 aa).

Belongs to the tyrosinase family. Hemocyanin subfamily. In terms of tissue distribution, hemolymph.

The protein localises to the secreted. It is found in the extracellular space. In terms of biological role, hemocyanins are copper-containing oxygen carriers occurring freely dissolved in the hemolymph of many mollusks and arthropods. The polypeptide is Hemocyanin subunit 3 (Maja squinado (Mediterranean spider crab)).